The chain runs to 428 residues: Enolase (428 aa).

Glutamine 162 contributes to the (2R)-2-phosphoglycerate binding site. Glutamate 204 serves as the catalytic Proton donor. Mg(2+) contacts are provided by aspartate 241, glutamate 288, and aspartate 315. 4 residues coordinate (2R)-2-phosphoglycerate: lysine 340, arginine 369, serine 370, and lysine 391. The active-site Proton acceptor is the lysine 340.

Belongs to the enolase family. Requires Mg(2+) as cofactor.

The protein resides in the cytoplasm. The protein localises to the secreted. Its subcellular location is the cell surface. It carries out the reaction (2R)-2-phosphoglycerate = phosphoenolpyruvate + H2O. Its pathway is carbohydrate degradation; glycolysis; pyruvate from D-glyceraldehyde 3-phosphate: step 4/5. In terms of biological role, catalyzes the reversible conversion of 2-phosphoglycerate (2-PG) into phosphoenolpyruvate (PEP). It is essential for the degradation of carbohydrates via glycolysis. The polypeptide is Enolase (Azobacteroides pseudotrichonymphae genomovar. CFP2).